The sequence spans 33 residues: Rhinophrynin-33 (33 aa).

As to expression, expressed by the skin glands.

Its subcellular location is the secreted. Its function is as follows. Non-cytotoxic peptide with immunosuppressive and insulinotropic effects. Induces an increased production of the anti-inflammatory cytokine IL-10 and inhibits production of the pro-inflammatory cytokines TNF-alpha and IL-1beta, when incubated with mouse peritoneal cells. Does not display growth-inhibitory activity against the Gram-positive S.epidermidis and Gram-negative E.coli bacteria and against the opportunistic yeast pathogen C.parapsilosis (MIC&gt;128 uM). In addition, it lacks cytotoxic activity against mouse erythrocytes (LC(50)&gt;500 uM) and A549 human non-small cell lung adenocarcinoma cells (LC(50)&gt;100 uM). Moderately stimulates insulin release from rat clonal beta-cells and mouse pancreatic islets. In terms of biological role, non-cytotoxic peptide with immunosuppressive but without insulinotropic effects. Inhibits production of the pro-inflammatory cytokines TNF-alpha, but has no effect on IL-10 and IL-1beta production, when incubated with mouse peritoneal cells. Has no activity of stimulation of insulin release. In Rhinophrynus dorsalis (Mexican burrowing toad), this protein is Rhinophrynin-33.